We begin with the raw amino-acid sequence, 315 residues long: Methionyl-tRNA formyltransferase (315 aa).

113–116 serves as a coordination point for (6S)-5,6,7,8-tetrahydrofolate; the sequence is SLLP.

This sequence belongs to the Fmt family.

It carries out the reaction L-methionyl-tRNA(fMet) + (6R)-10-formyltetrahydrofolate = N-formyl-L-methionyl-tRNA(fMet) + (6S)-5,6,7,8-tetrahydrofolate + H(+). Functionally, attaches a formyl group to the free amino group of methionyl-tRNA(fMet). The formyl group appears to play a dual role in the initiator identity of N-formylmethionyl-tRNA by promoting its recognition by IF2 and preventing the misappropriation of this tRNA by the elongation apparatus. The chain is Methionyl-tRNA formyltransferase from Salmonella dublin (strain CT_02021853).